We begin with the raw amino-acid sequence, 460 residues long: Polygalacturonase (460 aa).

The signal sequence occupies residues 1-26; the sequence is MALKTQLLWSFVVVFVVSFSTTSCSG. N-linked (GlcNAc...) asparagine glycosylation is present at Asn-280. Asp-292 functions as the Proton donor in the catalytic mechanism. His-315 is an active-site residue. The N-linked (GlcNAc...) asparagine glycan is linked to Asn-421.

This sequence belongs to the glycosyl hydrolase 28 family.

It localises to the secreted. The protein localises to the cell wall. It catalyses the reaction (1,4-alpha-D-galacturonosyl)n+m + H2O = (1,4-alpha-D-galacturonosyl)n + (1,4-alpha-D-galacturonosyl)m.. Its function is as follows. Acts in concert with the pectinesterase, in the ripening process. Is involved in cell wall metabolism, specifically in polyuronide degradation. The polypeptide is Polygalacturonase (Malus domestica (Apple)).